A 492-amino-acid chain; its full sequence is MADSEDTFRLQNSPSDSEPKDLQNEGKSDKQNAAVSKSPSSQTTYIQQGMEGIKVYLHERELWTKFHEVGTEMIITKAGRRMFPSFKVKVTGLNPKTKYILLMDVVPADDHRYKFADNKWSVTGKAEPAMPGRLYVHPDSPATGAHWMRQLVSFQKLKLTNNHLDPFGHIILNSMHKYQPRIHIVKADENNGFGSKNTAFCTHVFPETAFIAVTSYQNHKITQLKIENNPFAKGFRGSDDMELHRMSRMQSTKEYPVVPRSTVRQRVGSSQSPFSGDVQGLSASGAISSQYSCENGVSSTSQDLLPQSSSYHEHTQDYHCIKRKVEDECPAGEHPYKKPYVESSSSEDDHYYRPLSYSQSLGLSGGAPYRPESSQRQACMYASAPQPPEPVPSLEDISWPGVPPYSVPQMERLPYQHHFSAHFASRQMPEAHGMYASSVSHQCSPSGGIQSPSAGLQGNEYLYAHGLQRTLSPHQYHTVHSVSIMHDWNEAS.

The tract at residues 1-43 (MADSEDTFRLQNSPSDSEPKDLQNEGKSDKQNAAVSKSPSSQT) is disordered. Basic and acidic residues predominate over residues 17–30 (SEPKDLQNEGKSDK). Positions 31 to 43 (QNAAVSKSPSSQT) are enriched in polar residues. A DNA-binding region (T-box) is located at residues 62–237 (LWTKFHEVGT…NNPFAKGFRG (176 aa)). Positions 331-352 (AGEHPYKKPYVESSSSEDDHYY) are disordered.

Monomer. Homodimer (via the T-box); binds DNA as homodimer. In terms of tissue distribution, expressed in the dorsal optic cup of developing eye, pectoral fin buds and heart. At 31 hpf, when the pectoral fin buds have begun bulging outwards, restricted expression is detected throughout the mesenchyme of the early fin buds and these high levels of expression continue until later stages.

It localises to the nucleus. The protein localises to the cytoplasm. Functionally, required for pectoral fin formation. Together with tbx5b, involved in eye and heart development. Required for the looping stage of heart development. May bind to the core DNA motif of promoters. This chain is T-box transcription factor TBX5-A (tbx5a), found in Danio rerio (Zebrafish).